A 127-amino-acid polypeptide reads, in one-letter code: Large ribosomal subunit protein bL17 (127 aa).

This sequence belongs to the bacterial ribosomal protein bL17 family. As to quaternary structure, part of the 50S ribosomal subunit. Contacts protein L32.

The protein is Large ribosomal subunit protein bL17 of Levilactobacillus brevis (strain ATCC 367 / BCRC 12310 / CIP 105137 / JCM 1170 / LMG 11437 / NCIMB 947 / NCTC 947) (Lactobacillus brevis).